The sequence spans 66 residues: Protein translocase subunit SecE (66 aa).

Residues 41–61 form a helical membrane-spanning segment; sequence LAVMFIVGFVGFVIYILMEIL.

It belongs to the SecE/SEC61-gamma family. In terms of assembly, component of the Sec protein translocase complex. Heterotrimer consisting of SecY (alpha), SecG (beta) and SecE (gamma) subunits. The heterotrimers can form oligomers, although 1 heterotrimer is thought to be able to translocate proteins. Interacts with the ribosome. May interact with SecDF, and other proteins may be involved.

The protein resides in the cell membrane. Its function is as follows. Essential subunit of the Sec protein translocation channel SecYEG. Clamps together the 2 halves of SecY. May contact the channel plug during translocation. The protein is Protein translocase subunit SecE of Archaeoglobus fulgidus (strain ATCC 49558 / DSM 4304 / JCM 9628 / NBRC 100126 / VC-16).